Reading from the N-terminus, the 148-residue chain is Large ribosomal subunit protein uL16 (148 aa).

The protein belongs to the universal ribosomal protein uL16 family. In terms of assembly, part of the 50S ribosomal subunit.

Binds 23S rRNA and is also seen to make contacts with the A and possibly P site tRNAs. This Gloeobacter violaceus (strain ATCC 29082 / PCC 7421) protein is Large ribosomal subunit protein uL16.